We begin with the raw amino-acid sequence, 702 residues long: Polyphosphate kinase (702 aa).

N55 is an ATP binding site. 2 residues coordinate Mg(2+): R389 and R419. The active-site Phosphohistidine intermediate is the H449. Residues Y482, R578, and H606 each coordinate ATP.

This sequence belongs to the polyphosphate kinase 1 (PPK1) family. It depends on Mg(2+) as a cofactor. In terms of processing, an intermediate of this reaction is the autophosphorylated ppk in which a phosphate is covalently linked to a histidine residue through a N-P bond.

It carries out the reaction [phosphate](n) + ATP = [phosphate](n+1) + ADP. In terms of biological role, catalyzes the reversible transfer of the terminal phosphate of ATP to form a long-chain polyphosphate (polyP). This chain is Polyphosphate kinase, found in Bacillus anthracis.